Here is a 119-residue protein sequence, read N- to C-terminus: Myohemerythrin-1 (119 aa).

Residues H25, H55, N58, E59, H74, H78, H107, and D112 each contribute to the Fe cation site.

Belongs to the hemerythrin family. As to quaternary structure, monomer. Muscle.

In terms of biological role, myohemerythrin is an oxygen-binding protein found in the retractor muscles of certain worms. The oxygen-binding site contains two iron atoms. This Phascolopsis gouldii (Peanut worm) protein is Myohemerythrin-1.